The chain runs to 541 residues: uncharacterized protein (541 aa).

The next 6 membrane-spanning stretches (helical) occupy residues 57–77, 90–110, 144–164, 167–187, 221–241, and 257–277; these read LVVT…TIAI, LTFG…SYAL, VGHL…YGLI, AFIP…ATAT, MVVW…MAMF, and VLII…ILAW. Residues 278–329 form the HAMP domain; that stretch reads LTATPVRVVRAALRRVERGELRTNLVVFDGTELGELQRGFNAMVAGLRERER. Positions 361–485 constitute a Guanylate cyclase domain; sequence AVVFIDIVGS…EPVNEAARLC (125 aa).

It belongs to the adenylyl cyclase class-3 family.

It localises to the cell membrane. This is an uncharacterized protein from Mycobacterium tuberculosis (strain CDC 1551 / Oshkosh).